The following is a 409-amino-acid chain: Dual-specificity RNA methyltransferase RlmN (409 aa).

Glu117 (proton acceptor) is an active-site residue. The 250-residue stretch at Leu128–Asp377 folds into the Radical SAM core domain. A disulfide bridge links Cys135 with Cys382. The [4Fe-4S] cluster site is built by Cys142, Cys146, and Cys149. S-adenosyl-L-methionine-binding positions include Gly205–Glu206, Ser237, Ser259–His261, and Asn339. Cys382 functions as the S-methylcysteine intermediate in the catalytic mechanism.

Belongs to the radical SAM superfamily. RlmN family. [4Fe-4S] cluster is required as a cofactor.

It localises to the cytoplasm. It carries out the reaction adenosine(2503) in 23S rRNA + 2 reduced [2Fe-2S]-[ferredoxin] + 2 S-adenosyl-L-methionine = 2-methyladenosine(2503) in 23S rRNA + 5'-deoxyadenosine + L-methionine + 2 oxidized [2Fe-2S]-[ferredoxin] + S-adenosyl-L-homocysteine. The enzyme catalyses adenosine(37) in tRNA + 2 reduced [2Fe-2S]-[ferredoxin] + 2 S-adenosyl-L-methionine = 2-methyladenosine(37) in tRNA + 5'-deoxyadenosine + L-methionine + 2 oxidized [2Fe-2S]-[ferredoxin] + S-adenosyl-L-homocysteine. In terms of biological role, specifically methylates position 2 of adenine 2503 in 23S rRNA and position 2 of adenine 37 in tRNAs. m2A2503 modification seems to play a crucial role in the proofreading step occurring at the peptidyl transferase center and thus would serve to optimize ribosomal fidelity. In Psychrobacter arcticus (strain DSM 17307 / VKM B-2377 / 273-4), this protein is Dual-specificity RNA methyltransferase RlmN.